Consider the following 2426-residue polypeptide: Protein SON (2426 aa).

N-acetylalanine is present on Ala-2. At Lys-16 the chain carries N6-acetyllysine. Polar residues predominate over residues Leu-24–Glu-42. A disordered region spans residues Leu-24–Leu-56. Residue Lys-64 forms a Glycyl lysine isopeptide (Lys-Gly) (interchain with G-Cter in SUMO2) linkage. Over residues Leu-77–Arg-88 the composition is skewed to basic and acidic residues. A disordered region spans residues Leu-77 to Phe-155. Ser-94 is subject to Phosphoserine. The span at Lys-106–Lys-130 shows a compositional bias: basic residues. Basic and acidic residues predominate over residues Arg-131 to Gly-146. Ser-142, Ser-152, Ser-154, Ser-160, and Ser-283 each carry phosphoserine. Position 288 is an N6-acetyllysine (Lys-288). The tract at residues Thr-305–Phe-328 is disordered. Thr-400 is subject to Phosphothreonine. The interval Pro-406–Ser-442 is disordered. Residues Ser-409–Ser-442 are compositionally biased toward pro residues. The tract at residues Leu-726–Met-895 is 17 X 10 AA tandem repeats of L-A-[ST]-[NSG]-[TS]-MDSQM. An 11 X 7 AA tandem repeats of [DR]-P-Y-R-[LI][AG][QHP] region spans residues Asp-912–Pro-988. Position 950 is an omega-N-methylarginine (Arg-950). The residue at position 959 (Thr-959) is a Phosphothreonine. Ser-998 bears the Phosphoserine mark. 14 repeat units span residues Glu-1006–Ser-1011, Glu-1014–Ser-1019, Glu-1021–Ser-1026, Glu-1030–Ser-1035, Glu-1038–Ser-1043, Glu-1046–Ser-1051, Glu-1055–Ser-1060, Glu-1063–Ser-1068, Glu-1071–Ser-1076, Asp-1080–Ser-1085, Asp-1089–Ser-1094, Asp-1100–Ser-1105, Asp-1111–Ser-1116, and Asp-1121–Ser-1126. Residues Glu-1006–Ser-1126 are 14 X 6 AA repeats of [ED]-R-S-M-M-S. An Asymmetric dimethylarginine modification is found at Arg-1007. An Asymmetric dimethylarginine modification is found at Arg-1022. Phosphoserine occurs at positions 1035 and 1043. Phosphoserine occurs at positions 1060 and 1068. Ser-1082 is subject to Phosphoserine. The segment at Tyr-1144 to Asp-1236 is disordered. The interval Pro-1147–Gly-1179 is 3 X 11 AA tandem repats of P-P-L-P-P-E-E-P-P-[TME]-[MTG]. Pro residues predominate over residues Pro-1147 to Pro-1180. Residues Gln-1186–Pro-1196 are compositionally biased toward polar residues. Over residues Glu-1198–Ser-1224 the composition is skewed to low complexity. Residues Val-1359–Thr-1390 form a 4 X 8 AA tandem repeats of V-L-E-SS-[AVT]-VT region. 2 positions are modified to phosphoserine: Ser-1556 and Ser-1651. A disordered region spans residues Thr-1645 to Ser-1722. A compositionally biased stretch (basic and acidic residues) spans Lys-1677–Asp-1689. Phosphoserine occurs at positions 1697, 1701, 1747, 1759, 1766, 1769, 1782, and 1783. Residues Gly-1754–Asp-2054 form a disordered region. Composition is skewed to basic and acidic residues over residues Tyr-1790–Glu-1801, Arg-1809–Leu-1822, and Lys-1830–Ser-1845. Composition is skewed to basic residues over residues Arg-1846–Ser-1909 and Thr-1917–Ser-1948. Tandem repeats lie at residues Pro-1925–Ser-1931, Pro-1934–Ser-1952, Pro-1953–Thr-1959, Pro-1960–Thr-1966, Pro-1967–Thr-1973, Pro-1974–Thr-1980, Pro-1981–Thr-1987, Pro-1988–Thr-1994, and Pro-1995–Ser-2013. The segment at Pro-1925 to Thr-1994 is 7 X 7 AA repeats of P-S-R-R-S-R-[TS]. The 2 X 19 AA repeats of P-S-R-R-R-R-S-R-S-V-V-R-R-R-S-F-S-I-S stretch occupies residues Pro-1934–Ser-2013. A phosphoserine mark is found at Ser-1948, Ser-1950, and Ser-1952. Residues Arg-1955–Ser-2009 show a composition bias toward basic residues. Phosphoserine occurs at positions 2009, 2011, 2013, 2029, and 2031. The 3 X tandem repeats of [ST]-P-[VLI]-R-[RL]-[RK]-[RF]-S-R stretch occupies residues Ser-2013 to Arg-2039. The span at Arg-2016–Ser-2038 shows a compositional bias: basic residues. Residues Arg-2039 to Asp-2054 show a composition bias toward basic and acidic residues. Lys-2055 bears the N6-acetyllysine; alternate mark. Lys-2055 participates in a covalent cross-link: Glycyl lysine isopeptide (Lys-Gly) (interchain with G-Cter in SUMO2); alternate. Lys-2092 is covalently cross-linked (Glycyl lysine isopeptide (Lys-Gly) (interchain with G-Cter in SUMO2)). At Ser-2129 the chain carries Phosphoserine. Lys-2149 is covalently cross-linked (Glycyl lysine isopeptide (Lys-Gly) (interchain with G-Cter in SUMO2)). At Thr-2163 the chain carries Phosphothreonine. A disordered region spans residues Lys-2200–Pro-2220. Position 2238 is a phosphoserine (Ser-2238). The G-patch domain maps to Thr-2305 to Glu-2351. The 56-residue stretch at His-2371 to Tyr-2426 folds into the DRBM domain.

Interacts with SRSF2. Associates with the spliceosome. Interacts with the AML1-MTG8 (AML1-ETO) fusion protein, possibly leading to trigger signals inhibiting leukemogenesis. Interacts with USH1G. Widely expressed, with the higher expression seen in leukocyte and heart.

It is found in the nucleus speckle. Functionally, RNA-binding protein that acts as a mRNA splicing cofactor by promoting efficient splicing of transcripts that possess weak splice sites. Specifically promotes splicing of many cell-cycle and DNA-repair transcripts that possess weak splice sites, such as TUBG1, KATNB1, TUBGCP2, AURKB, PCNT, AKT1, RAD23A, and FANCG. Probably acts by facilitating the interaction between Serine/arginine-rich proteins such as SRSF2 and the RNA polymerase II. Also binds to DNA; binds to the consensus DNA sequence: 5'-GA[GT]AN[CG][AG]CC-3'. May indirectly repress hepatitis B virus (HBV) core promoter activity and transcription of HBV genes and production of HBV virions. Essential for correct RNA splicing of multiple genes critical for brain development, neuronal migration and metabolism, including TUBG1, FLNA, PNKP, WDR62, PSMD3, PCK2, PFKL, IDH2, and ACY1. This Homo sapiens (Human) protein is Protein SON (SON).